The following is a 149-amino-acid chain: Peptide deformylase (149 aa).

Fe cation contacts are provided by cysteine 92 and histidine 134. Residue glutamate 135 is part of the active site. Histidine 138 is a binding site for Fe cation.

Belongs to the polypeptide deformylase family. Fe(2+) serves as cofactor.

The enzyme catalyses N-terminal N-formyl-L-methionyl-[peptide] + H2O = N-terminal L-methionyl-[peptide] + formate. Functionally, removes the formyl group from the N-terminal Met of newly synthesized proteins. Requires at least a dipeptide for an efficient rate of reaction. N-terminal L-methionine is a prerequisite for activity but the enzyme has broad specificity at other positions. The protein is Peptide deformylase of Buchnera aphidicola subsp. Cinara cedri (strain Cc).